A 66-amino-acid chain; its full sequence is Large ribosomal subunit protein bL35 (66 aa).

The span at 1 to 14 shows a compositional bias: basic residues; that stretch reads MPKMKTKSAAKKRF. The segment at 1–34 is disordered; it reads MPKMKTKSAAKKRFSMTATGKVKAGPAGKRHGMI.

The protein belongs to the bacterial ribosomal protein bL35 family.

In Paracoccus denitrificans (strain Pd 1222), this protein is Large ribosomal subunit protein bL35.